Reading from the N-terminus, the 449-residue chain is Putative F-box/FBD/LRR-repeat protein At5g62970 (449 aa).

The F-box domain maps to 2 to 50 (DKISGFSDDELLVKILSFLPFKFAITTSVLSKQWKFLWMRVPKLEYDED). 6 LRR repeats span residues 27-52 (TTSV…EDSM), 81-107 (GHRM…RLKF), 158-185 (TLKL…HLER), 186-211 (VTYG…VVEL), 252-279 (YFKL…NITA), and 328-354 (IHNA…EFDE). Residues 368-418 (FWNQPNSVPQCLLSTLQTFEWSGYPGSVQGKDLATYILRKSRQLKIATISI) form the FBD domain.

The sequence is that of Putative F-box/FBD/LRR-repeat protein At5g62970 from Arabidopsis thaliana (Mouse-ear cress).